Consider the following 354-residue polypeptide: Ferrochelatase (354 aa).

Residues H191 and E271 each contribute to the Fe cation site.

This sequence belongs to the ferrochelatase family.

Its subcellular location is the cytoplasm. It carries out the reaction heme b + 2 H(+) = protoporphyrin IX + Fe(2+). It functions in the pathway porphyrin-containing compound metabolism; protoheme biosynthesis; protoheme from protoporphyrin-IX: step 1/1. Functionally, catalyzes the ferrous insertion into protoporphyrin IX. The sequence is that of Ferrochelatase from Rickettsia bellii (strain OSU 85-389).